A 635-amino-acid polypeptide reads, in one-letter code: Threonine--tRNA ligase (635 aa).

The TGS domain maps to 1-62 (MITITLPDGS…EHDAMLRIIT (62 aa)). The catalytic stretch occupies residues 244–535 (DHRKIGKVQD…LIEHYAGIWP (292 aa)). Zn(2+)-binding residues include Cys-335, His-386, and His-512.

This sequence belongs to the class-II aminoacyl-tRNA synthetase family. As to quaternary structure, homodimer. It depends on Zn(2+) as a cofactor.

The protein localises to the cytoplasm. It catalyses the reaction tRNA(Thr) + L-threonine + ATP = L-threonyl-tRNA(Thr) + AMP + diphosphate + H(+). Its function is as follows. Catalyzes the attachment of threonine to tRNA(Thr) in a two-step reaction: L-threonine is first activated by ATP to form Thr-AMP and then transferred to the acceptor end of tRNA(Thr). Also edits incorrectly charged L-seryl-tRNA(Thr). The polypeptide is Threonine--tRNA ligase (Xylella fastidiosa (strain 9a5c)).